Here is a 354-residue protein sequence, read N- to C-terminus: Uroporphyrinogen decarboxylase (354 aa).

Substrate-binding positions include 27–31, aspartate 77, tyrosine 154, serine 209, and histidine 327; that span reads RQAGR.

This sequence belongs to the uroporphyrinogen decarboxylase family. In terms of assembly, homodimer.

It is found in the cytoplasm. The enzyme catalyses uroporphyrinogen III + 4 H(+) = coproporphyrinogen III + 4 CO2. It functions in the pathway porphyrin-containing compound metabolism; protoporphyrin-IX biosynthesis; coproporphyrinogen-III from 5-aminolevulinate: step 4/4. Catalyzes the decarboxylation of four acetate groups of uroporphyrinogen-III to yield coproporphyrinogen-III. This is Uroporphyrinogen decarboxylase from Shewanella piezotolerans (strain WP3 / JCM 13877).